The following is a 277-amino-acid chain: Phosphonates import ATP-binding protein PhnC 2 (277 aa).

One can recognise an ABC transporter domain in the interval 5 to 253 (IHVQGLNKTF…FLNDLYGADA (249 aa)). Position 37-44 (37-44 (GASGSGKS)) interacts with ATP.

The protein belongs to the ABC transporter superfamily. Phosphonates importer (TC 3.A.1.9.1) family. The complex is composed of two ATP-binding proteins (PhnC), two transmembrane proteins (PhnE) and a solute-binding protein (PhnD).

It is found in the cell inner membrane. It carries out the reaction phosphonate(out) + ATP + H2O = phosphonate(in) + ADP + phosphate + H(+). Part of the ABC transporter complex PhnCDE involved in phosphonates import. Responsible for energy coupling to the transport system. The sequence is that of Phosphonates import ATP-binding protein PhnC 2 from Pseudomonas syringae pv. syringae (strain B728a).